The following is a 199-amino-acid chain: Recombination protein RecR (199 aa).

The C4-type zinc finger occupies 57-72 (CQSCRTFTEETYCPIC). A Toprim domain is found at 81-176 (EVICVVETPA…TVSRIAHGVP (96 aa)).

The protein belongs to the RecR family.

Functionally, may play a role in DNA repair. It seems to be involved in an RecBC-independent recombinational process of DNA repair. It may act with RecF and RecO. The sequence is that of Recombination protein RecR from Shewanella pealeana (strain ATCC 700345 / ANG-SQ1).